The following is an 811-amino-acid chain: Mitochondrial intermediate peptidase (811 aa).

A mitochondrion-targeting transit peptide spans 1–25 (MRSGSRLSNYLVRLSGRVSFTQKRS). Residues 423–450 (TENGEKASTDTSTSTTTSTTTTDSTTTT) are disordered. A compositionally biased stretch (low complexity) spans 431 to 450 (TDTSTSTTTSTTTTDSTTTT). Histidine 593 lines the Zn(2+) pocket. Glutamate 594 is an active-site residue. Residues histidine 597 and histidine 600 each coordinate Zn(2+).

This sequence belongs to the peptidase M3 family. Requires Zn(2+) as cofactor.

It is found in the mitochondrion matrix. It catalyses the reaction Release of an N-terminal octapeptide as second stage of processing of some proteins imported into the mitochondrion.. Cleaves proteins, imported into the mitochondrion, to their mature size. While most mitochondrial precursor proteins are processed to the mature form in one step by mitochondrial processing peptidase (MPP), the sequential cleavage by MIP of an octapeptide after initial processing by MPP is a required step for a subgroup of nuclear-encoded precursor proteins destined for the matrix or the inner membrane. In Lodderomyces elongisporus (strain ATCC 11503 / CBS 2605 / JCM 1781 / NBRC 1676 / NRRL YB-4239) (Yeast), this protein is Mitochondrial intermediate peptidase (OCT1).